A 152-amino-acid chain; its full sequence is Protein Smg homolog (152 aa).

Belongs to the Smg family.

The chain is Protein Smg homolog from Bordetella bronchiseptica (strain ATCC BAA-588 / NCTC 13252 / RB50) (Alcaligenes bronchisepticus).